A 189-amino-acid chain; its full sequence is Elongation factor P (189 aa).

The protein belongs to the elongation factor P family.

It localises to the cytoplasm. Its pathway is protein biosynthesis; polypeptide chain elongation. Functionally, involved in peptide bond synthesis. Stimulates efficient translation and peptide-bond synthesis on native or reconstituted 70S ribosomes in vitro. Probably functions indirectly by altering the affinity of the ribosome for aminoacyl-tRNA, thus increasing their reactivity as acceptors for peptidyl transferase. The chain is Elongation factor P from Pseudomonas putida (strain ATCC 700007 / DSM 6899 / JCM 31910 / BCRC 17059 / LMG 24140 / F1).